The primary structure comprises 508 residues: H/ACA ribonucleoprotein complex subunit 4 (508 aa).

Residues 1–29 (MADVEVRKEKKKKKIKEEPLDGDDIGTLQ) are disordered. The active-site Nucleophile is D123. A PUA domain is found at 294 to 369 (HKRIIMKDSS…VVAKIKRVIM (76 aa)). Residues 423–508 (AAQEVSPTNG…KDRDRDEAQE (86 aa)) form a disordered region. S442 bears the Phosphoserine mark. A compositionally biased stretch (low complexity) spans 442–457 (STSSVEETAAAAVSEE). A Phosphothreonine modification is found at T443. Phosphoserine occurs at positions 444 and 445. T449 carries the phosphothreonine modification. Residue S455 is modified to Phosphoserine. A Phosphothreonine modification is found at T458. Residues 475–485 (EAPEAAEEEAE) are compositionally biased toward acidic residues. Residues 499–508 (KDRDRDEAQE) are compositionally biased toward basic and acidic residues.

Belongs to the pseudouridine synthase TruB family. As to quaternary structure, component of the box H/ACA small nucleolar ribonucleoprotein (H/ACA snoRNP) complex consisting of Nop60B, Gar1, NPH2 and Nop10, and associated with H/ACA-type snoRNAs. In terms of tissue distribution, expressed at higher levels in females than in males. Expressed almost exclusively in females with high levels of expression in the ovary.

It localises to the nucleus. The protein resides in the nucleolus. It catalyses the reaction a uridine in RNA = a pseudouridine in RNA. Its function is as follows. Catalytic subunit of the box H/ACA small nucleolar ribonucleoprotein (H/ACA snoRNP) complex, which catalyzes pseudouridylation of rRNA. This involves the isomerization of uridine such that the ribose is subsequently attached to C5, instead of the normal N1. Pseudouridine ('psi') residues may serve to stabilize the conformation of rRNAs. Required for ribosome biogenesis; plays a central role in ribosomal RNA processing. H/ACA snoRNP complex-dependent ribosome biogenesis is important in female germline cell differentiation during oogenesis. Essential for viability and female fertility. Required for maintenance of the germline stem cell lineage during spermatogenesis. This is H/ACA ribonucleoprotein complex subunit 4 from Drosophila melanogaster (Fruit fly).